Reading from the N-terminus, the 256-residue chain is tRNA-cytidine(32) 2-sulfurtransferase (256 aa).

The PP-loop motif signature appears at 35-40 (SGGKDS). The [4Fe-4S] cluster site is built by cysteine 110, cysteine 113, and cysteine 201.

This sequence belongs to the TtcA family. In terms of assembly, homodimer. Mg(2+) is required as a cofactor. Requires [4Fe-4S] cluster as cofactor.

The protein resides in the cytoplasm. The enzyme catalyses cytidine(32) in tRNA + S-sulfanyl-L-cysteinyl-[cysteine desulfurase] + AH2 + ATP = 2-thiocytidine(32) in tRNA + L-cysteinyl-[cysteine desulfurase] + A + AMP + diphosphate + H(+). The protein operates within tRNA modification. Its function is as follows. Catalyzes the ATP-dependent 2-thiolation of cytidine in position 32 of tRNA, to form 2-thiocytidine (s(2)C32). The sulfur atoms are provided by the cysteine/cysteine desulfurase (IscS) system. This Coxiella burnetii (strain RSA 331 / Henzerling II) protein is tRNA-cytidine(32) 2-sulfurtransferase.